Here is a 55-residue protein sequence, read N- to C-terminus: Large ribosomal subunit protein bL33 (55 aa).

Basic and acidic residues predominate over residues 1 to 11 (MAKGGREKIKL). The interval 1–27 (MAKGGREKIKLESTAGTGHFYTTSKNK) is disordered. Residues 14 to 24 (TAGTGHFYTTS) show a composition bias toward polar residues.

Belongs to the bacterial ribosomal protein bL33 family.

This chain is Large ribosomal subunit protein bL33, found in Dechloromonas aromatica (strain RCB).